The following is a 1407-amino-acid chain: DNA-directed RNA polymerase subunit beta' (1407 aa).

4 residues coordinate Zn(2+): Cys-70, Cys-72, Cys-85, and Cys-88. Residues Asp-460, Asp-462, and Asp-464 each contribute to the Mg(2+) site. 4 residues coordinate Zn(2+): Cys-814, Cys-888, Cys-895, and Cys-898.

It belongs to the RNA polymerase beta' chain family. The RNAP catalytic core consists of 2 alpha, 1 beta, 1 beta' and 1 omega subunit. When a sigma factor is associated with the core the holoenzyme is formed, which can initiate transcription. Requires Mg(2+) as cofactor. Zn(2+) serves as cofactor.

It catalyses the reaction RNA(n) + a ribonucleoside 5'-triphosphate = RNA(n+1) + diphosphate. DNA-dependent RNA polymerase catalyzes the transcription of DNA into RNA using the four ribonucleoside triphosphates as substrates. This chain is DNA-directed RNA polymerase subunit beta', found in Citrobacter koseri (strain ATCC BAA-895 / CDC 4225-83 / SGSC4696).